The sequence spans 545 residues: CTP synthase (545 aa).

The segment at 1-267 (MTKFIFVTGG…AEQTLKLLQM (267 aa)) is amidoligase domain. S13 contacts CTP. S13 contributes to the UTP binding site. ATP-binding positions include 14-19 (SIGKGI) and D71. Residues D71 and E141 each coordinate Mg(2+). CTP-binding positions include 148 to 150 (DIE), 188 to 193 (KTKPTQ), and K224. UTP-binding positions include 188–193 (KTKPTQ) and K224. Positions 292–534 (EIAIVGKYVS…VQAAIAQSHP (243 aa)) constitute a Glutamine amidotransferase type-1 domain. G354 provides a ligand contact to L-glutamine. The active-site Nucleophile; for glutamine hydrolysis is C381. L-glutamine contacts are provided by residues 382 to 385 (LGMQ), E405, and R462. Active-site residues include H507 and E509.

The protein belongs to the CTP synthase family. In terms of assembly, homotetramer.

The enzyme catalyses UTP + L-glutamine + ATP + H2O = CTP + L-glutamate + ADP + phosphate + 2 H(+). The catalysed reaction is L-glutamine + H2O = L-glutamate + NH4(+). It catalyses the reaction UTP + NH4(+) + ATP = CTP + ADP + phosphate + 2 H(+). It functions in the pathway pyrimidine metabolism; CTP biosynthesis via de novo pathway; CTP from UDP: step 2/2. With respect to regulation, allosterically activated by GTP, when glutamine is the substrate; GTP has no effect on the reaction when ammonia is the substrate. The allosteric effector GTP functions by stabilizing the protein conformation that binds the tetrahedral intermediate(s) formed during glutamine hydrolysis. Inhibited by the product CTP, via allosteric rather than competitive inhibition. In terms of biological role, catalyzes the ATP-dependent amination of UTP to CTP with either L-glutamine or ammonia as the source of nitrogen. Regulates intracellular CTP levels through interactions with the four ribonucleotide triphosphates. The protein is CTP synthase of Trichormus variabilis (strain ATCC 29413 / PCC 7937) (Anabaena variabilis).